The primary structure comprises 150 residues: Ribosomal RNA large subunit methyltransferase H (150 aa).

Residues isoleucine 71, alanine 100, and 118 to 123 (LSEMTF) contribute to the S-adenosyl-L-methionine site.

Belongs to the RNA methyltransferase RlmH family. As to quaternary structure, homodimer.

The protein localises to the cytoplasm. It carries out the reaction pseudouridine(1915) in 23S rRNA + S-adenosyl-L-methionine = N(3)-methylpseudouridine(1915) in 23S rRNA + S-adenosyl-L-homocysteine + H(+). In terms of biological role, specifically methylates the pseudouridine at position 1915 (m3Psi1915) in 23S rRNA. In Helicobacter acinonychis (strain Sheeba), this protein is Ribosomal RNA large subunit methyltransferase H.